The sequence spans 213 residues: High frequency lysogenization protein HflD homolog (213 aa).

The protein belongs to the HflD family.

It localises to the cytoplasm. The protein resides in the cell inner membrane. This is High frequency lysogenization protein HflD homolog from Nitrosococcus oceani (strain ATCC 19707 / BCRC 17464 / JCM 30415 / NCIMB 11848 / C-107).